Consider the following 131-residue polypeptide: Large ribosomal subunit protein bL17 (131 aa).

The protein belongs to the bacterial ribosomal protein bL17 family. Part of the 50S ribosomal subunit. Contacts protein L32.

This is Large ribosomal subunit protein bL17 from Methylacidiphilum infernorum (isolate V4) (Methylokorus infernorum (strain V4)).